The primary structure comprises 269 residues: Regulatory protein RecX (269 aa).

The protein belongs to the RecX family.

The protein resides in the cytoplasm. In terms of biological role, modulates RecA activity. This chain is Regulatory protein RecX, found in Geobacillus thermodenitrificans (strain NG80-2).